A 251-amino-acid polypeptide reads, in one-letter code: Tyrosine phosphatase-like protein J3 (251 aa).

The Tyrosine-protein phosphatase domain occupies 26–251 (IADEYYTIVP…PVLQNSKRRE (226 aa)).

The protein belongs to the protein-tyrosine phosphatase family.

In Microplitis demolitor (Parasitoid wasp), this protein is Tyrosine phosphatase-like protein J3 (J4).